We begin with the raw amino-acid sequence, 78 residues long: MTLFSSITSISKTNTSSKSSLNSFSGSSLSMGSNSVACGGCDKPAAGAAILANIDIKAKVDLSLSAAAAASAKCGACH.

Residues 1–31 are disordered; sequence MTLFSSITSISKTNTSSKSSLNSFSGSSLSM.

This sequence belongs to the hssA/B family.

This is HssA/B-like protein 29 (hssl29) from Dictyostelium discoideum (Social amoeba).